A 465-amino-acid chain; its full sequence is MNEAFDCVVIGAGPGGYVAAITAAQAGLKTALIEEREAGGTCLNRGCIPSKALLASAEIVAQIRHADQFGIHINGFSIDYPAMVQRKDTVVRSIRDGLNGLIRSNKITVFSGRGSLISSTEVKILGETPSVIKAQSIILATGSEPRAFPGVPFSQQSPRILCSTGVLNLKEIPQKMAIIGGGVIGCEFASLFHTLGSEVSVIEASQQILALNNPDISKTMFDKFTRHGIRFMLGASVSSIEDMGDRVRLTINGNIEEYDYVLVSIGRRLNTENIGLDKAGVICDERGVIPTDSTMRTNVPNIYAIGDITGKWQLAHVASHQGIVAARNIAGHKDEIDYSAVPSVIFTFPEVASVGLSPTSAQQQGIPVKVTKFPFRAIGKAVAMGESDGFAAIISHETSQQILGAYVIGPHASSLISEITLAIRNELTLPCIYETIHAHPTLAEVWAESALLAVDTPLHMPPTRK.

FAD contacts are provided by residues 34–42 (EEREAGGTC), K51, and G114. A disulfide bridge links C42 with C47. NAD(+) is bound by residues 180–184 (GGGVI), E203, V237, and 264–267 (SIGR). The FAD site is built by D307 and A315. The active-site Proton acceptor is the H439.

It belongs to the class-I pyridine nucleotide-disulfide oxidoreductase family. Requires FAD as cofactor.

It is found in the cytoplasm. It catalyses the reaction N(6)-[(R)-dihydrolipoyl]-L-lysyl-[protein] + NAD(+) = N(6)-[(R)-lipoyl]-L-lysyl-[protein] + NADH + H(+). In terms of biological role, the branched-chain alpha-keto dehydrogenase complex catalyzes the overall conversion of alpha-keto acids to acyl-CoA and CO(2). It contains multiple copies of 3 enzymatic components: branched-chain alpha-keto acid decarboxylase (E1), lipoamide acyltransferase (E2) and lipoamide dehydrogenase (E3). The polypeptide is Dihydrolipoyl dehydrogenase (lpdA) (Chlamydia muridarum (strain MoPn / Nigg)).